A 163-amino-acid chain; its full sequence is ATP synthase subunit b (163 aa).

A propeptide spanning residues 1–11 (MLWKANVWVLG) is cleaved from the precursor. A helical membrane pass occupies residues 16–36 (GISGGTIIYQLLMFIILLALL).

This sequence belongs to the ATPase B chain family. F-type ATPases have 2 components, F(1) - the catalytic core - and F(0) - the membrane proton channel. F(1) has five subunits: alpha(3), beta(3), gamma(1), delta(1), epsilon(1). F(0) has three main subunits: a(1), b(2) and c(10-14). The alpha and beta chains form an alternating ring which encloses part of the gamma chain. F(1) is attached to F(0) by a central stalk formed by the gamma and epsilon chains, while a peripheral stalk is formed by the delta and b chains.

It is found in the cell membrane. In terms of biological role, f(1)F(0) ATP synthase produces ATP from ADP in the presence of a proton or sodium gradient. F-type ATPases consist of two structural domains, F(1) containing the extramembraneous catalytic core and F(0) containing the membrane proton channel, linked together by a central stalk and a peripheral stalk. During catalysis, ATP synthesis in the catalytic domain of F(1) is coupled via a rotary mechanism of the central stalk subunits to proton translocation. Functionally, component of the F(0) channel, it forms part of the peripheral stalk, linking F(1) to F(0). The chain is ATP synthase subunit b from Bacillus sp. (strain PS3).